Here is a 122-residue protein sequence, read N- to C-terminus: Large ribosomal subunit protein uL14 (122 aa).

It belongs to the universal ribosomal protein uL14 family. Part of the 50S ribosomal subunit. Forms a cluster with proteins L3 and L19. In the 70S ribosome, L14 and L19 interact and together make contacts with the 16S rRNA in bridges B5 and B8.

Functionally, binds to 23S rRNA. Forms part of two intersubunit bridges in the 70S ribosome. In Methylobacterium sp. (strain 4-46), this protein is Large ribosomal subunit protein uL14.